The chain runs to 289 residues: Toxin tox21A (289 aa).

Residues 1-14 (MNLYFLFFISTILA) form the signal peptide. A propeptide spanning residues 15 to 27 (AKPFNSFNKTSLI) is cleaved from the precursor. The interval 270-289 (DKDITVHENAGDPKSDSRRC) is disordered.

Post-translationally, contains several disulfide bonds. As to expression, posterior glands which appear to be connected with the stylet through a series of ducts.

It localises to the secreted. Its function is as follows. Has contracting-paralyzing activity in insect larvae. This is Toxin tox21A from Pyemotes tritici (Straw itch mite).